A 199-amino-acid chain; its full sequence is MAGETVITVVGNLVDDPELRFTPSGAAVAKFRVASTPRTFDRQTNEWKDGESLFLTCSVWRQAAENVAESLQRGMRVIVQGRLKQRSYEDREGVKRTVYELDVDEVGASLRSATAKVTKTSGQGRGGQGGYGGGGGGQGGGGWGGGPGGGQQGGGAPADDPWATGGAPAGGQQGGGGQGGGGWGGGSGGGGGYSDEPPF.

The SSB domain occupies 1–110 (MAGETVITVV…LDVDEVGASL (110 aa)). The tract at residues 114–199 (TAKVTKTSGQ…GGGYSDEPPF (86 aa)) is disordered. Residues 123 to 156 (QGRGGQGGYGGGGGGQGGGGWGGGPGGGQQGGGA) are compositionally biased toward gly residues. Positions 157-166 (PADDPWATGG) are enriched in low complexity. Residues 167 to 193 (APAGGQQGGGGQGGGGWGGGSGGGGGY) are compositionally biased toward gly residues.

Homotetramer. Post-translationally, phosphorylated on tyrosine residue(s) when expressed in E.coli.

Its subcellular location is the cytoplasm. It is found in the nucleoid. This is Single-stranded DNA-binding protein 2 (ssb2) from Streptomyces coelicolor (strain ATCC BAA-471 / A3(2) / M145).